The chain runs to 437 residues: 23S rRNA (uracil(1939)-C(5))-methyltransferase RlmD (437 aa).

Residues 10-68 (SAPRNTTFVAEILDLDYQGRGVAKVQGKTWFIENALPQEKVEVRIVDEKRHYGHGISCK) form the TRAM domain. Positions 81, 87, 90, and 167 each coordinate [4Fe-4S] cluster. Residues Gln270, Phe299, Asn304, Glu320, Asn347, and Asp368 each coordinate S-adenosyl-L-methionine. The active-site Nucleophile is the Cys394.

It belongs to the class I-like SAM-binding methyltransferase superfamily. RNA M5U methyltransferase family. RlmD subfamily.

The enzyme catalyses uridine(1939) in 23S rRNA + S-adenosyl-L-methionine = 5-methyluridine(1939) in 23S rRNA + S-adenosyl-L-homocysteine + H(+). Functionally, catalyzes the formation of 5-methyl-uridine at position 1939 (m5U1939) in 23S rRNA. The chain is 23S rRNA (uracil(1939)-C(5))-methyltransferase RlmD from Pasteurella multocida (strain Pm70).